Consider the following 316-residue polypeptide: 4-hydroxy-3-methylbut-2-enyl diphosphate reductase (316 aa).

Cysteine 12 contributes to the [4Fe-4S] cluster binding site. The (2E)-4-hydroxy-3-methylbut-2-enyl diphosphate site is built by histidine 43 and histidine 81. Residues histidine 43 and histidine 81 each coordinate dimethylallyl diphosphate. Isopentenyl diphosphate is bound by residues histidine 43 and histidine 81. Residue cysteine 103 participates in [4Fe-4S] cluster binding. Histidine 131 is a binding site for (2E)-4-hydroxy-3-methylbut-2-enyl diphosphate. Histidine 131 serves as a coordination point for dimethylallyl diphosphate. Histidine 131 is a binding site for isopentenyl diphosphate. Glutamate 133 (proton donor) is an active-site residue. Threonine 170 serves as a coordination point for (2E)-4-hydroxy-3-methylbut-2-enyl diphosphate. Cysteine 198 contacts [4Fe-4S] cluster. Residues serine 226, asparagine 228, and serine 271 each contribute to the (2E)-4-hydroxy-3-methylbut-2-enyl diphosphate site. The dimethylallyl diphosphate site is built by serine 226, asparagine 228, and serine 271. Residues serine 226, asparagine 228, and serine 271 each coordinate isopentenyl diphosphate.

Belongs to the IspH family. [4Fe-4S] cluster is required as a cofactor.

The enzyme catalyses isopentenyl diphosphate + 2 oxidized [2Fe-2S]-[ferredoxin] + H2O = (2E)-4-hydroxy-3-methylbut-2-enyl diphosphate + 2 reduced [2Fe-2S]-[ferredoxin] + 2 H(+). It carries out the reaction dimethylallyl diphosphate + 2 oxidized [2Fe-2S]-[ferredoxin] + H2O = (2E)-4-hydroxy-3-methylbut-2-enyl diphosphate + 2 reduced [2Fe-2S]-[ferredoxin] + 2 H(+). The protein operates within isoprenoid biosynthesis; dimethylallyl diphosphate biosynthesis; dimethylallyl diphosphate from (2E)-4-hydroxy-3-methylbutenyl diphosphate: step 1/1. Its pathway is isoprenoid biosynthesis; isopentenyl diphosphate biosynthesis via DXP pathway; isopentenyl diphosphate from 1-deoxy-D-xylulose 5-phosphate: step 6/6. Catalyzes the conversion of 1-hydroxy-2-methyl-2-(E)-butenyl 4-diphosphate (HMBPP) into a mixture of isopentenyl diphosphate (IPP) and dimethylallyl diphosphate (DMAPP). Acts in the terminal step of the DOXP/MEP pathway for isoprenoid precursor biosynthesis. The chain is 4-hydroxy-3-methylbut-2-enyl diphosphate reductase from Bacillus anthracis (strain A0248).